Reading from the N-terminus, the 373-residue chain is Spermidine/putrescine import ATP-binding protein PotA (373 aa).

Residues 8-238 form the ABC transporter domain; it reads FELRGVSKYF…PANLYVARFV (231 aa). Residue 40–47 coordinates ATP; sequence GPSGCGKT.

This sequence belongs to the ABC transporter superfamily. Spermidine/putrescine importer (TC 3.A.1.11.1) family. The complex is composed of two ATP-binding proteins (PotA), two transmembrane proteins (PotB and PotC) and a solute-binding protein (PotD).

It is found in the cell inner membrane. It catalyses the reaction ATP + H2O + polyamine-[polyamine-binding protein]Side 1 = ADP + phosphate + polyamineSide 2 + [polyamine-binding protein]Side 1.. Functionally, part of the ABC transporter complex PotABCD involved in spermidine/putrescine import. Responsible for energy coupling to the transport system. The polypeptide is Spermidine/putrescine import ATP-binding protein PotA (Oleidesulfovibrio alaskensis (strain ATCC BAA-1058 / DSM 17464 / G20) (Desulfovibrio alaskensis)).